The sequence spans 283 residues: Pantothenate synthetase (283 aa).

30 to 37 (MGALHEGH) lines the ATP pocket. His37 functions as the Proton donor in the catalytic mechanism. (R)-pantoate is bound at residue Gln61. Gln61 is a binding site for beta-alanine. ATP is bound at residue 147-150 (GEKD). (R)-pantoate is bound at residue Gln153. ATP is bound by residues Val176 and 184-187 (VSSR).

This sequence belongs to the pantothenate synthetase family. As to quaternary structure, homodimer.

The protein resides in the cytoplasm. It catalyses the reaction (R)-pantoate + beta-alanine + ATP = (R)-pantothenate + AMP + diphosphate + H(+). Its pathway is cofactor biosynthesis; (R)-pantothenate biosynthesis; (R)-pantothenate from (R)-pantoate and beta-alanine: step 1/1. Functionally, catalyzes the condensation of pantoate with beta-alanine in an ATP-dependent reaction via a pantoyl-adenylate intermediate. The protein is Pantothenate synthetase of Chlorobium limicola (strain DSM 245 / NBRC 103803 / 6330).